The chain runs to 704 residues: Elongation factor G (704 aa).

Residues 8–290 (EKYRNIGICA…GVVRYLPAPN (283 aa)) form the tr-type G domain. Residues 17–24 (AHVDAGKT), 88–92 (DTPGH), and 142–145 (NKMD) each bind GTP.

Belongs to the TRAFAC class translation factor GTPase superfamily. Classic translation factor GTPase family. EF-G/EF-2 subfamily.

The protein localises to the cytoplasm. In terms of biological role, catalyzes the GTP-dependent ribosomal translocation step during translation elongation. During this step, the ribosome changes from the pre-translocational (PRE) to the post-translocational (POST) state as the newly formed A-site-bound peptidyl-tRNA and P-site-bound deacylated tRNA move to the P and E sites, respectively. Catalyzes the coordinated movement of the two tRNA molecules, the mRNA and conformational changes in the ribosome. The sequence is that of Elongation factor G from Francisella tularensis subsp. holarctica (strain FTNF002-00 / FTA).